Here is a 99-residue protein sequence, read N- to C-terminus: Aspartyl/glutamyl-tRNA(Asn/Gln) amidotransferase subunit C (99 aa).

Belongs to the GatC family. As to quaternary structure, heterotrimer of A, B and C subunits.

It catalyses the reaction L-glutamyl-tRNA(Gln) + L-glutamine + ATP + H2O = L-glutaminyl-tRNA(Gln) + L-glutamate + ADP + phosphate + H(+). It carries out the reaction L-aspartyl-tRNA(Asn) + L-glutamine + ATP + H2O = L-asparaginyl-tRNA(Asn) + L-glutamate + ADP + phosphate + 2 H(+). Functionally, allows the formation of correctly charged Asn-tRNA(Asn) or Gln-tRNA(Gln) through the transamidation of misacylated Asp-tRNA(Asn) or Glu-tRNA(Gln) in organisms which lack either or both of asparaginyl-tRNA or glutaminyl-tRNA synthetases. The reaction takes place in the presence of glutamine and ATP through an activated phospho-Asp-tRNA(Asn) or phospho-Glu-tRNA(Gln). The sequence is that of Aspartyl/glutamyl-tRNA(Asn/Gln) amidotransferase subunit C from Burkholderia lata (strain ATCC 17760 / DSM 23089 / LMG 22485 / NCIMB 9086 / R18194 / 383).